The following is a 111-amino-acid chain: Nucleoid-associated protein Teth514_0034 (111 aa).

It belongs to the YbaB/EbfC family. Homodimer.

The protein resides in the cytoplasm. It localises to the nucleoid. Its function is as follows. Binds to DNA and alters its conformation. May be involved in regulation of gene expression, nucleoid organization and DNA protection. This is Nucleoid-associated protein Teth514_0034 from Thermoanaerobacter sp. (strain X514).